A 660-amino-acid chain; its full sequence is Bifunctional polymyxin resistance protein ArnA (660 aa).

The formyltransferase ArnAFT stretch occupies residues 1–304 (MKTVVFAYHD…TLGLVQGSRL (304 aa)). 86 to 88 (HLI) contributes to the (6R)-10-formyltetrahydrofolate binding site. The Proton donor; for formyltransferase activity role is filled by His104. Residues Arg114 and 136–140 (VKRAD) each bind (6R)-10-formyltetrahydrofolate. The interval 314-660 (RRTRVLILGV…RTVDLTDKPS (347 aa)) is dehydrogenase ArnADH. Residues Asp347 and 368 to 369 (DI) contribute to the NAD(+) site. UDP-alpha-D-glucuronate-binding positions include Ala393, Tyr398, and 432 to 433 (TS). The Proton acceptor; for decarboxylase activity role is filled by Glu434. UDP-alpha-D-glucuronate-binding positions include Arg460, Asn492, 526 to 535 (KLIDGGKQKR), and Tyr613. The active-site Proton donor; for decarboxylase activity is Arg619.

In the N-terminal section; belongs to the Fmt family. UDP-L-Ara4N formyltransferase subfamily. The protein in the C-terminal section; belongs to the NAD(P)-dependent epimerase/dehydratase family. UDP-glucuronic acid decarboxylase subfamily. As to quaternary structure, homohexamer, formed by a dimer of trimers.

The catalysed reaction is UDP-alpha-D-glucuronate + NAD(+) = UDP-beta-L-threo-pentopyranos-4-ulose + CO2 + NADH. It carries out the reaction UDP-4-amino-4-deoxy-beta-L-arabinose + (6R)-10-formyltetrahydrofolate = UDP-4-deoxy-4-formamido-beta-L-arabinose + (6S)-5,6,7,8-tetrahydrofolate + H(+). It participates in nucleotide-sugar biosynthesis; UDP-4-deoxy-4-formamido-beta-L-arabinose biosynthesis; UDP-4-deoxy-4-formamido-beta-L-arabinose from UDP-alpha-D-glucuronate: step 1/3. The protein operates within nucleotide-sugar biosynthesis; UDP-4-deoxy-4-formamido-beta-L-arabinose biosynthesis; UDP-4-deoxy-4-formamido-beta-L-arabinose from UDP-alpha-D-glucuronate: step 3/3. It functions in the pathway bacterial outer membrane biogenesis; lipopolysaccharide biosynthesis. Its function is as follows. Bifunctional enzyme that catalyzes the oxidative decarboxylation of UDP-glucuronic acid (UDP-GlcUA) to UDP-4-keto-arabinose (UDP-Ara4O) and the addition of a formyl group to UDP-4-amino-4-deoxy-L-arabinose (UDP-L-Ara4N) to form UDP-L-4-formamido-arabinose (UDP-L-Ara4FN). The modified arabinose is attached to lipid A and is required for resistance to polymyxin and cationic antimicrobial peptides. This chain is Bifunctional polymyxin resistance protein ArnA, found in Escherichia coli O6:H1 (strain CFT073 / ATCC 700928 / UPEC).